Reading from the N-terminus, the 313-residue chain is Protoheme IX farnesyltransferase (313 aa).

Helical transmembrane passes span Leu-35–Leu-55, Ala-56–Trp-76, Val-98–Leu-118, Val-120–Val-140, Ile-153–Gly-173, Ile-180–Phe-200, Ile-226–Phe-246, Ala-248–Val-268, and Leu-292–Ile-312.

It belongs to the UbiA prenyltransferase family. Protoheme IX farnesyltransferase subfamily.

The protein localises to the cell inner membrane. It catalyses the reaction heme b + (2E,6E)-farnesyl diphosphate + H2O = Fe(II)-heme o + diphosphate. It functions in the pathway porphyrin-containing compound metabolism; heme O biosynthesis; heme O from protoheme: step 1/1. Converts heme B (protoheme IX) to heme O by substitution of the vinyl group on carbon 2 of heme B porphyrin ring with a hydroxyethyl farnesyl side group. The chain is Protoheme IX farnesyltransferase from Afipia carboxidovorans (strain ATCC 49405 / DSM 1227 / KCTC 32145 / OM5) (Oligotropha carboxidovorans).